The chain runs to 234 residues: Large ribosomal subunit protein uL1 (234 aa).

It belongs to the universal ribosomal protein uL1 family. As to quaternary structure, part of the 50S ribosomal subunit.

In terms of biological role, binds directly to 23S rRNA. The L1 stalk is quite mobile in the ribosome, and is involved in E site tRNA release. Protein L1 is also a translational repressor protein, it controls the translation of the L11 operon by binding to its mRNA. This is Large ribosomal subunit protein uL1 from Serratia proteamaculans (strain 568).